We begin with the raw amino-acid sequence, 94 residues long: Small ribosomal subunit protein bS20 (94 aa).

The protein belongs to the bacterial ribosomal protein bS20 family.

Functionally, binds directly to 16S ribosomal RNA. The sequence is that of Small ribosomal subunit protein bS20 from Acaryochloris marina (strain MBIC 11017).